The sequence spans 103 residues: Histone H4 (103 aa).

The segment covering 1 to 14 (MSGRGKGGKGLGKG) has biased composition (gly residues). The interval 1 to 20 (MSGRGKGGKGLGKGGAKRHR) is disordered. Residue Ser2 is modified to N-acetylserine. N6-acetyl-N6-methyllysine; alternate is present on residues Lys6 and Lys13. Lys17 is subject to N6-acetyllysine. The DNA-binding element occupies 17–21 (KRHRK). Residue Lys21 is modified to N6-methyllysine.

The protein belongs to the histone H4 family. In terms of assembly, the nucleosome is a histone octamer containing two molecules each of H2A, H2B, H3 and H4 assembled in one H3-H4 heterotetramer and two H2A-H2B heterodimers. The octamer wraps approximately 147 bp of DNA.

Its subcellular location is the nucleus. The protein localises to the chromosome. In terms of biological role, core component of nucleosome. Nucleosomes wrap and compact DNA into chromatin, limiting DNA accessibility to the cellular machineries which require DNA as a template. Histones thereby play a central role in transcription regulation, DNA repair, DNA replication and chromosomal stability. DNA accessibility is regulated via a complex set of post-translational modifications of histones, also called histone code, and nucleosome remodeling. The polypeptide is Histone H4 (Ascaris suum (Pig roundworm)).